Consider the following 658-residue polypeptide: Aminopeptidase P1 (658 aa).

Residues Arg-69 and His-436 each contribute to the a peptide site. Residues Asp-456, Asp-467, and His-530 each coordinate Mn(2+). Residues His-530, His-539, and Glu-563 each coordinate a peptide. Mn(2+)-binding residues include Glu-563 and Glu-577.

Belongs to the peptidase M24B family. As to quaternary structure, homodimer. Interacts with N-1-naphthylphthalamic acid (NPA). Interacts with NBCL/BOP2/COCH around the plasma membrane and in the nucleus; this interaction disturbs its regulation of the nuclear transcription factor Y subunit (NF-YA1). The cofactor is Mn(2+). Requires Zn(2+) as cofactor. Expressed at similar levels in shoot apical meristems (SAM), root meristems (RM), root apical meristems (RAM), roots and leaves and, to a slightly lesser degree, in root nodules.

The protein localises to the nucleus. It localises to the cytoplasm. It is found in the cell membrane. The protein resides in the microsome membrane. The catalysed reaction is Release of any N-terminal amino acid, including proline, that is linked to proline, even from a dipeptide or tripeptide.. Its function is as follows. Catalyzes the removal of a penultimate prolyl residue from the N-termini of peptides, such as Arg-Pro-Pro. Aminopeptidase that binds to the auxin transport inhibitor N-1-naphthylphthalamic acid (NPA). May play a negative role in the regulation of PIN auxin transport proteins. Involved in the coordination of the symbiotic nodule developmental program; prevents the formation of root nodules by regulating the expression of the nuclear transcription factor Y subunit (NF-YA1), a key nodulin. This chain is Aminopeptidase P1, found in Lotus japonicus (Lotus corniculatus var. japonicus).